Consider the following 241-residue polypeptide: F-box protein At3g22350 (241 aa).

The F-box domain maps to 1 to 44 (MSDLPLDLVEEILSRVSATSLKRLRSTCKQWNTLFKKRSFSQKH).

This chain is F-box protein At3g22350, found in Arabidopsis thaliana (Mouse-ear cress).